The primary structure comprises 469 residues: Glutamate--tRNA ligase 1 (469 aa).

Positions 8 to 18 match the 'HIGH' region motif; it reads PSPTGYLHIGG. Positions 117–137 are disordered; that stretch reads TPRYDGTWRPEPGKELPPVPA. Positions 240–244 match the 'KMSKS' region motif; the sequence is KLSKR. An ATP-binding site is contributed by Lys-243.

Belongs to the class-I aminoacyl-tRNA synthetase family. Glutamate--tRNA ligase type 1 subfamily. Monomer.

The protein localises to the cytoplasm. It carries out the reaction tRNA(Glu) + L-glutamate + ATP = L-glutamyl-tRNA(Glu) + AMP + diphosphate. In terms of biological role, catalyzes the attachment of glutamate to tRNA(Glu) in a two-step reaction: glutamate is first activated by ATP to form Glu-AMP and then transferred to the acceptor end of tRNA(Glu). The sequence is that of Glutamate--tRNA ligase 1 from Aliarcobacter butzleri (strain RM4018) (Arcobacter butzleri).